The primary structure comprises 546 residues: Chaperonin GroEL (546 aa).

ATP contacts are provided by residues 30-33, lysine 51, 87-91, glycine 415, 479-481, and aspartate 495; these read TLGP, DGTTT, and NAA. The segment at 526-546 is disordered; the sequence is KEEKPDLSGAGAGMGGMGGMM. Gly residues predominate over residues 535-546; it reads AGAGMGGMGGMM.

The protein belongs to the chaperonin (HSP60) family. As to quaternary structure, forms a cylinder of 14 subunits composed of two heptameric rings stacked back-to-back. Interacts with the co-chaperonin GroES.

It localises to the cytoplasm. The enzyme catalyses ATP + H2O + a folded polypeptide = ADP + phosphate + an unfolded polypeptide.. In terms of biological role, together with its co-chaperonin GroES, plays an essential role in assisting protein folding. The GroEL-GroES system forms a nano-cage that allows encapsulation of the non-native substrate proteins and provides a physical environment optimized to promote and accelerate protein folding. The polypeptide is Chaperonin GroEL (Wigglesworthia glossinidia brevipalpis).